We begin with the raw amino-acid sequence, 577 residues long: Arginine--tRNA ligase (577 aa).

Positions 122–132 (PNVAKEMHVGH) match the 'HIGH' region motif.

Belongs to the class-I aminoacyl-tRNA synthetase family. Monomer.

The protein resides in the cytoplasm. The catalysed reaction is tRNA(Arg) + L-arginine + ATP = L-arginyl-tRNA(Arg) + AMP + diphosphate. The sequence is that of Arginine--tRNA ligase from Klebsiella pneumoniae subsp. pneumoniae (strain ATCC 700721 / MGH 78578).